Here is a 256-residue protein sequence, read N- to C-terminus: Hypodermin-A (256 aa).

The first 22 residues, 1 to 22, serve as a signal peptide directing secretion; the sequence is MLKFVILLCSIAYVFGAVVPLG. Positions 23–30 are cleaved as a propeptide — activation peptide; sequence MLSQSDGR. A Peptidase S1 domain is found at 31 to 254; it reads IVGGVESKIE…VRSLIVSNAE (224 aa). A disulfide bond links Cys56 and Cys72. Active-site charge relay system residues include His71 and Asp116. Disulfide bonds link Cys180–Cys197 and Cys206–Cys230. Ser210 acts as the Charge relay system in catalysis.

Belongs to the peptidase S1 family.

Its subcellular location is the secreted. Its function is as follows. Specificity, limited to carboxyl side of arginine residue in B-chain of insulin. The protein is Hypodermin-A of Hypoderma lineatum (Early cattle grub).